The primary structure comprises 116 residues: Large ribosomal subunit protein uL18 (116 aa).

The protein belongs to the universal ribosomal protein uL18 family. Part of the 50S ribosomal subunit; part of the 5S rRNA/L5/L18/L25 subcomplex. Contacts the 5S and 23S rRNAs.

Functionally, this is one of the proteins that bind and probably mediate the attachment of the 5S RNA into the large ribosomal subunit, where it forms part of the central protuberance. In Azotobacter vinelandii (strain DJ / ATCC BAA-1303), this protein is Large ribosomal subunit protein uL18.